The chain runs to 458 residues: ATP synthase subunit beta (458 aa).

Position 148 to 155 (148 to 155 (GGAGVGKT)) interacts with ATP.

This sequence belongs to the ATPase alpha/beta chains family. As to quaternary structure, F-type ATPases have 2 components, CF(1) - the catalytic core - and CF(0) - the membrane proton channel. CF(1) has five subunits: alpha(3), beta(3), gamma(1), delta(1), epsilon(1). CF(0) has three main subunits: a(1), b(2) and c(9-12). The alpha and beta chains form an alternating ring which encloses part of the gamma chain. CF(1) is attached to CF(0) by a central stalk formed by the gamma and epsilon chains, while a peripheral stalk is formed by the delta and b chains.

It is found in the cell inner membrane. The enzyme catalyses ATP + H2O + 4 H(+)(in) = ADP + phosphate + 5 H(+)(out). Functionally, produces ATP from ADP in the presence of a proton gradient across the membrane. The catalytic sites are hosted primarily by the beta subunits. The protein is ATP synthase subunit beta of Pseudomonas fluorescens (strain Pf0-1).